Consider the following 305-residue polypeptide: tRNA dimethylallyltransferase (305 aa).

9-16 is a binding site for ATP; the sequence is GPTASGKT. 11–16 contacts substrate; it reads TASGKT. Interaction with substrate tRNA regions lie at residues 34-37, 158-162, and 239-244; these read DSAL, QRLSR, and RCVGYR.

It belongs to the IPP transferase family. Monomer. It depends on Mg(2+) as a cofactor.

The enzyme catalyses adenosine(37) in tRNA + dimethylallyl diphosphate = N(6)-dimethylallyladenosine(37) in tRNA + diphosphate. Functionally, catalyzes the transfer of a dimethylallyl group onto the adenine at position 37 in tRNAs that read codons beginning with uridine, leading to the formation of N6-(dimethylallyl)adenosine (i(6)A). In Aeromonas hydrophila subsp. hydrophila (strain ATCC 7966 / DSM 30187 / BCRC 13018 / CCUG 14551 / JCM 1027 / KCTC 2358 / NCIMB 9240 / NCTC 8049), this protein is tRNA dimethylallyltransferase.